Here is an 818-residue protein sequence, read N- to C-terminus: Piwi-like protein (818 aa).

The PAZ domain maps to 220-339 (RINRVLNDNS…ITGELCFLCG (120 aa)). In terms of domain architecture, Piwi spans 501 to 800 (KIALVFVPDD…LAELIGKVHK (300 aa)).

Belongs to the argonaute family. Piwi subfamily.

This chain is Piwi-like protein (iwi), found in Dugesia japonica (Planarian).